Consider the following 103-residue polypeptide: Sec-independent protein translocase protein TatA (103 aa).

The helical transmembrane segment at 1–21 (MSLGPWEIAIIVLLIIVLFGA) threads the bilayer. The tract at residues 42–103 (VKEMQKDDET…QNYEDPNRTP (62 aa)) is disordered. Positions 52–90 (PAQPEQQPQGYQHPQQIEAPQNLQQPNFQQHYQNQPQQP) are enriched in low complexity. Residues 94–103 (QNYEDPNRTP) are compositionally biased toward basic and acidic residues.

Belongs to the TatA/E family. In terms of assembly, the Tat system comprises two distinct complexes: a TatABC complex, containing multiple copies of TatA, TatB and TatC subunits, and a separate TatA complex, containing only TatA subunits. Substrates initially bind to the TatABC complex, which probably triggers association of the separate TatA complex to form the active translocon.

Its subcellular location is the cell membrane. Functionally, part of the twin-arginine translocation (Tat) system that transports large folded proteins containing a characteristic twin-arginine motif in their signal peptide across membranes. TatA could form the protein-conducting channel of the Tat system. In Corynebacterium efficiens (strain DSM 44549 / YS-314 / AJ 12310 / JCM 11189 / NBRC 100395), this protein is Sec-independent protein translocase protein TatA.